The sequence spans 840 residues: MKLWTYLLYPSLLACLSLQSQSPMPSVRGSCDTLCNCEEKDGIMIINCEEKGINKLSQISVPPSRPFHLSLLNNGLTMLHTNDFSGLTNALSIHLGFNNIADIETGAFNGLGLLKQLHINHNSLEILKEDTFHGLENLEFLQADNNFITIIEPSAFSKLNRLKVLILNDNAIESLPPNIFRFVPLTHLDLRGNQLQTLPYVGFLEHIGRILDLQLEDNKWACNCELLQLKNWLENMPPQSIIGDVICYSPPPFKGSVLSRLKKESFCPTPPVYEEHEDPSGSLLAITSSTSDSRLSSKNTSILKQPTKAPGLIPYLTKPSTQLPVPYCPIPCNCKVLSPSGLLIHCQERNIESLSDLQPPPHNPRKLILAGNIIHTLMKSDLTDYFTLEMLHLGNNRIEVLEEGSFMNLTRLQKLYLNGNHLTKLNKGMFLGLHSLEYLYLEYNAVKEILPGTFNPMPKLKVLYLNNNLLQVLPAHIFLGIPLTRVNLKTNQFTHLPVSNILDDLDFLIQIDLEDNPWDCSCDLVGLQQWIHKLGKGTMTDDILCTSPGHLDKKELKALNSDLLCPGLVNNPSMPTQTTYVIVTSPTVAADTASTLFSSLTDAVPLSVLILGLLIVFITIVFCAAGIVVFVLHRRRRYKKKKVEEQLRDNSPVHLQYSMYGHKTTHHTTERPSSSLYEQHMVSPMVHVYRSPSFGPKHLEEVEERNDKEGNDAKHLQRSLLERENHSPLTGSNMKYKTTDQSTDFISFQDASLLYRNILEKERELQQLGITEYLRKNLAQLQPEVEVNYPGAHEELKLMETLMYSRPRKVLVEQTKNEYFELKANLHAEPDYLEVLEQQT.

An N-terminal signal peptide occupies residues M1–L18. In terms of domain architecture, LRRNT 1 spans S22–F67. The Extracellular portion of the chain corresponds to P23–L609. 5 LRR repeats span residues N89 to G110, L113 to G134, N137 to K158, R161 to F182, and P184 to E205. One can recognise an LRRCT 1 domain in the interval N218–T269. In terms of domain architecture, LRRNT 2 spans P319–P360. 6 LRR repeats span residues N363–D384, T387–N408, R411–G432, S435–P456, K459–G480, and P482–D503. Positions N516–G567 constitute an LRRCT 2 domain. Residues I610 to F630 form a helical membrane-spanning segment. Residues V631 to T840 are Cytoplasmic-facing. Basic and acidic residues predominate over residues Q717–H726. Residues Q717 to Y736 form a disordered region. Over residues S727–Y736 the composition is skewed to polar residues.

The protein belongs to the SLITRK family. As to expression, in the embryo, expressed in otic cyst, lateral trunk epidermis and underlying mesodermal tissue, limb bud, maxillary process, cochlea, retina, tongue, tooth primordium, central nervous system, and primordia of visceral organs including lung, gastrointestinal tract and pancreas. In the central nervous system, expressed primarily in dorsal thalamus, cerebellum and medulla.

It is found in the cell membrane. Functionally, regulator of neurite outgrowth required for normal hearing and vision. The protein is SLIT and NTRK-like protein 6 (Slitrk6) of Mus musculus (Mouse).